We begin with the raw amino-acid sequence, 103 residues long: Large ribosomal subunit protein bL21 (103 aa).

This sequence belongs to the bacterial ribosomal protein bL21 family. In terms of assembly, part of the 50S ribosomal subunit. Contacts protein L20.

Functionally, this protein binds to 23S rRNA in the presence of protein L20. The sequence is that of Large ribosomal subunit protein bL21 from Chloroflexus aggregans (strain MD-66 / DSM 9485).